We begin with the raw amino-acid sequence, 340 residues long: Cell growth-regulated gene 1 protein (340 aa).

This sequence belongs to the SMP-30/CGR1 family.

Its function is as follows. Involved in the cell growth regulation. This Candida albicans (strain SC5314 / ATCC MYA-2876) (Yeast) protein is Cell growth-regulated gene 1 protein (CGR1).